The chain runs to 1192 residues: DNA ligase 1 (1192 aa).

Disordered stretches follow at residues 29–257 (ELNK…KEKE) and 280–517 (EKEL…KSTQ). Over residues 42–56 (EAVVKEKVEKKEKKE) the composition is skewed to basic and acidic residues. Residues 70-113 (EEEEEEQEEQDGEEEQEEEEEYQQQDEEIEEDINGEEEMELDEN) are compositionally biased toward acidic residues. A compositionally biased stretch (basic and acidic residues) spans 141-155 (KTIENKETKKPEKQS). The span at 172-198 (DDEEDEEDENKTDDNDLDDMLDDDSDN) shows a compositional bias: acidic residues. 2 stretches are compositionally biased toward basic and acidic residues: residues 199–257 (EKDS…KEKE) and 280–368 (EKEL…RANA). Low complexity-rich tracts occupy residues 371–382 (KSSVPTSTSKNS) and 410–434 (STTTTTTTTTTSTATTISSKSISSP). Residues 435-467 (SKKEEKEVITSKKQVEATKVEVKKEKEKEKEKE) show a composition bias toward basic and acidic residues. Residues 468–511 (KEDDEEEEEEEEDDDEKLEDIDEEEYEEEEEEDEEGISENEEEE) show a composition bias toward acidic residues. The interval 724-733 (KLRIGLAERS) is interaction with target DNA. Position 842 (glutamate 842) interacts with ATP. Catalysis depends on lysine 844, which acts as the N6-AMP-lysine intermediate. ATP is bound by residues arginine 849 and arginine 865. Position 897 (glutamate 897) interacts with Mg(2+). Residues 918–920 (ARK) are interaction with target DNA. Mg(2+) is bound at residue glutamate 996. ATP is bound by residues lysine 1001, arginine 1014, and lysine 1020. The interval 1157 to 1192 (DKSPEDATSSDQVVDMYQNQKINSQSSKINEKDEDY) is disordered. Polar residues predominate over residues 1162 to 1184 (DATSSDQVVDMYQNQKINSQSSK).

It belongs to the ATP-dependent DNA ligase family. Mg(2+) serves as cofactor.

It is found in the nucleus. It carries out the reaction ATP + (deoxyribonucleotide)n-3'-hydroxyl + 5'-phospho-(deoxyribonucleotide)m = (deoxyribonucleotide)n+m + AMP + diphosphate.. Functionally, DNA ligase that seals nicks in double-stranded DNA during DNA replication, DNA recombination and DNA repair. The polypeptide is DNA ligase 1 (lig1) (Dictyostelium discoideum (Social amoeba)).